The sequence spans 260 residues: Carbonic anhydrase 2 (260 aa).

The 257-residue stretch at 3–259 (HHWGYDSHNG…LKSREVRASF (257 aa)) folds into the Alpha-carbonic anhydrase domain. Histidine 64 functions as the Proton donor/acceptor in the catalytic mechanism. 3 residues coordinate Zn(2+): histidine 94, histidine 96, and histidine 119. Residue 198–199 (TT) coordinates substrate.

It belongs to the alpha-carbonic anhydrase family. Requires Zn(2+) as cofactor.

It is found in the cytoplasm. Its subcellular location is the cell membrane. The enzyme catalyses hydrogencarbonate + H(+) = CO2 + H2O. The catalysed reaction is urea = cyanamide + H2O. Its activity is regulated as follows. Inhibited by acetazolamide. In terms of biological role, catalyzes the reversible hydration of carbon dioxide. Can also hydrate cyanamide to urea. The protein is Carbonic anhydrase 2 (CA2) of Gallus gallus (Chicken).